Consider the following 477-residue polypeptide: Phosphatidylinositol 4-kinase type 2-beta (477 aa).

The segment at 1–80 (MPEPPRDIMA…EDRSISASLS (80 aa)) is disordered. S45 carries the phosphoserine modification. A PI3K/PI4K catalytic domain is found at 116–447 (GVFPERISQG…AQMPCVIVEC (332 aa)). A G-loop region spans residues 122–128 (ISQGSSG). Positions 129 and 144 each coordinate ATP. Residues 149–151 (EPY) are important for substrate binding. Residues 157–170 (KWTKYVHKVCCPCC) are important for interaction with membranes. Residues 253-256 (QLFV) and 267-268 (RR) contribute to the ATP site. The segment at 260–268 (KEAEYWLRR) is important for interaction with membranes. A catalytic loop region spans residues 297 to 305 (RNTDRGNDN). Residues 338-358 (AIDNGLAFPFKHPDEWRAYPF) are activation loop. D340 serves as a coordination point for ATP. Positions 353–362 (WRAYPFHWAW) are important for interaction with membranes.

This sequence belongs to the PI3/PI4-kinase family. Type II PI4K subfamily.

Its subcellular location is the cytoplasm. It localises to the cytosol. The protein localises to the golgi apparatus membrane. It is found in the endoplasmic reticulum membrane. The protein resides in the cell membrane. Its subcellular location is the early endosome membrane. It carries out the reaction a 1,2-diacyl-sn-glycero-3-phospho-(1D-myo-inositol) + ATP = a 1,2-diacyl-sn-glycero-3-phospho-(1D-myo-inositol 4-phosphate) + ADP + H(+). Functionally, together with PI4K2A and the type III PI4Ks (PIK4CA and PIK4CB) it contributes to the overall PI4-kinase activity of the cell. This contribution may be especially significant in plasma membrane, endosomal and Golgi compartments. The phosphorylation of phosphatidylinositol (PI) to PI4P is the first committed step in the generation of phosphatidylinositol 4,5-bisphosphate (PIP2), a precursor of the second messenger inositol 1,4,5-trisphosphate (InsP3). Contributes to the production of InsP3 in stimulated cells and is likely to be involved in the regulation of vesicular trafficking. The sequence is that of Phosphatidylinositol 4-kinase type 2-beta (Pi4k2b) from Rattus norvegicus (Rat).